A 113-amino-acid chain; its full sequence is Phosphoribosyl-ATP pyrophosphatase (113 aa).

This sequence belongs to the PRA-PH family.

It is found in the cytoplasm. The catalysed reaction is 1-(5-phospho-beta-D-ribosyl)-ATP + H2O = 1-(5-phospho-beta-D-ribosyl)-5'-AMP + diphosphate + H(+). It participates in amino-acid biosynthesis; L-histidine biosynthesis; L-histidine from 5-phospho-alpha-D-ribose 1-diphosphate: step 2/9. In Hydrogenovibrio crunogenus (strain DSM 25203 / XCL-2) (Thiomicrospira crunogena), this protein is Phosphoribosyl-ATP pyrophosphatase.